The sequence spans 906 residues: Protein translocase subunit SecA (906 aa).

ATP-binding positions include Gln-87, 105–109 (GEGKT), and Asp-512. A disordered region spans residues 875–897 (VTFVRDEQKVGRNDPCPCGSGKK). Residues Cys-890, Cys-892, Cys-901, and His-902 each contribute to the Zn(2+) site.

Belongs to the SecA family. Monomer and homodimer. Part of the essential Sec protein translocation apparatus which comprises SecA, SecYEG and auxiliary proteins SecDF-YajC and YidC. The cofactor is Zn(2+).

It localises to the cell inner membrane. It is found in the cytoplasm. The enzyme catalyses ATP + H2O + cellular proteinSide 1 = ADP + phosphate + cellular proteinSide 2.. Functionally, part of the Sec protein translocase complex. Interacts with the SecYEG preprotein conducting channel. Has a central role in coupling the hydrolysis of ATP to the transfer of proteins into and across the cell membrane, serving both as a receptor for the preprotein-SecB complex and as an ATP-driven molecular motor driving the stepwise translocation of polypeptide chains across the membrane. In Aeromonas hydrophila subsp. hydrophila (strain ATCC 7966 / DSM 30187 / BCRC 13018 / CCUG 14551 / JCM 1027 / KCTC 2358 / NCIMB 9240 / NCTC 8049), this protein is Protein translocase subunit SecA.